We begin with the raw amino-acid sequence, 147 residues long: UPF0306 protein YhbP (147 aa).

This sequence belongs to the UPF0306 family.

In Escherichia coli O17:K52:H18 (strain UMN026 / ExPEC), this protein is UPF0306 protein YhbP.